We begin with the raw amino-acid sequence, 508 residues long: MKLAYWMYAGPAHIGTLRVATSFKNVHAIMHAPLGDDYFNVMRSMLSRERDFTPVTTSVVDRHVLARGSQEKVVDNITRKDAEERPDLIVLTPTCTSSILQEDLENFVERAQLEAKGDVLLADVNHYRVNELQAGDRTLHQIVQYYIEKARKKGELPEGKTAKPSVNIIGISTLGFHNNHDCTELKRLMADLGIEVNAVIPEGASVHELKNLPRAWFNLVPYRELGLMTANYLEKEFGTPCIDIVPMGVVETARCIRKIQEVINAQGADVNYEDYINEQTLYVSQAAWFSRSIDCQNLTGKKAVVFGDNTHAAALTKILSREMGIHVVWAGTYCKYDADWFREQVSEYCDEVLITEDHGEIGDAIARVEPSAIFGTQMERHVGKRLDIPCGVIAAPIHVQNFPIGYKPFLGYEGTNQITDLIYNSFTLGMEDHLLEIFGGHDTKEVITKGISAGSDLSWTKDGLAELNKIPGFVRGKVKRNTEKFARDRGFKDISAEVLYAAKEAVGA.

Residue Asp36 participates in [4Fe-4S] cluster binding. The active-site Proton donor is Asp294. Substrate is bound at residue 429 to 430 (GM).

The protein belongs to the ChlB/BchB/BchZ family. Protochlorophyllide reductase is composed of three subunits; ChlL, ChlN and ChlB. Forms a heterotetramer of two ChlB and two ChlN subunits. The cofactor is [4Fe-4S] cluster.

The enzyme catalyses chlorophyllide a + oxidized 2[4Fe-4S]-[ferredoxin] + 2 ADP + 2 phosphate = protochlorophyllide a + reduced 2[4Fe-4S]-[ferredoxin] + 2 ATP + 2 H2O. It functions in the pathway porphyrin-containing compound metabolism; chlorophyll biosynthesis (light-independent). Component of the dark-operative protochlorophyllide reductase (DPOR) that uses Mg-ATP and reduced ferredoxin to reduce ring D of protochlorophyllide (Pchlide) to form chlorophyllide a (Chlide). This reaction is light-independent. The NB-protein (ChlN-ChlB) is the catalytic component of the complex. This Nostoc sp. (strain PCC 7120 / SAG 25.82 / UTEX 2576) protein is Light-independent protochlorophyllide reductase subunit B.